The sequence spans 464 residues: Histidine--tRNA ligase (464 aa).

Belongs to the class-II aminoacyl-tRNA synthetase family. In terms of assembly, homodimer.

It localises to the cytoplasm. It catalyses the reaction tRNA(His) + L-histidine + ATP = L-histidyl-tRNA(His) + AMP + diphosphate + H(+). The chain is Histidine--tRNA ligase from Stenotrophomonas maltophilia (strain K279a).